The chain runs to 106 residues: Ig kappa chain C region, A allele (106 aa).

An Ig-like domain is found at 5 to 102; the sequence is PTVSIFPPSM…SSSPVVKSFN (98 aa). The cysteines at positions 26 and 86 are disulfide-linked.

The polypeptide is Ig kappa chain C region, A allele (Rattus norvegicus (Rat)).